Here is a 457-residue protein sequence, read N- to C-terminus: NADH-quinone oxidoreductase subunit N (457 aa).

Helical transmembrane passes span 2 to 22, 25 to 45, 60 to 80, 92 to 112, 114 to 134, 149 to 169, 188 to 208, 222 to 242, 253 to 273, 283 to 303, 310 to 330, 353 to 373, 382 to 402, and 431 to 451; these read NAIILISVLGILSMMSEFIGL, LIYPIILISLIGILGYNACTF, NYSVAFGSLLITITLFWFILF, GDHYALILFSTVGGLVLVSFS, MSMLFLGVEILSIPLYILAGS, FILGSFATGIMLLGIALIYGA, FFIGITLLSIAFAFKVSAVPF, FITAFMSTFVKVAAFGAFYLM, YLSHTLIGLSALTIVVGNIAA, LAFSGVSQAGYMLMVFPILTI, FVYLAGYAIANLIAIYIVQVV, AFVLSLSLISLAGIPPAAGFF, VIHAGNIYLVLIAILGSLISV, and VILAIMSALVVLIGLFPDILL.

It belongs to the complex I subunit 2 family. NDH-1 is composed of 14 different subunits. Subunits NuoA, H, J, K, L, M, N constitute the membrane sector of the complex.

It localises to the cell inner membrane. The enzyme catalyses a quinone + NADH + 5 H(+)(in) = a quinol + NAD(+) + 4 H(+)(out). In terms of biological role, NDH-1 shuttles electrons from NADH, via FMN and iron-sulfur (Fe-S) centers, to quinones in the respiratory chain. The immediate electron acceptor for the enzyme in this species is believed to be a menaquinone. Couples the redox reaction to proton translocation (for every two electrons transferred, four hydrogen ions are translocated across the cytoplasmic membrane), and thus conserves the redox energy in a proton gradient. This Cytophaga hutchinsonii (strain ATCC 33406 / DSM 1761 / CIP 103989 / NBRC 15051 / NCIMB 9469 / D465) protein is NADH-quinone oxidoreductase subunit N.